The sequence spans 261 residues: Mlc titration factor A (261 aa).

Residues H111, H148, H152, and E211 each coordinate Zn(2+).

This sequence belongs to the MtfA family. Interacts with Mlc. The cofactor is Zn(2+).

Its subcellular location is the cytoplasm. Its function is as follows. Involved in the modulation of the activity of the glucose-phosphotransferase system (glucose-PTS). Interacts with the transcriptional repressor Mlc, preventing its interaction with DNA and leading to the modulation of expression of genes regulated by Mlc, including ptsG, which encodes the PTS system glucose-specific EIICB component. In terms of biological role, shows zinc-dependent metallopeptidase activity. The polypeptide is Mlc titration factor A (Edwardsiella ictaluri (strain 93-146)).